The chain runs to 308 residues: Phenylcoumaran benzylic ether reductase PT1 (308 aa).

NADP(+)-binding positions include 11–17 (GATGYIG), arginine 36, and lysine 46. Residue lysine 134 is the Proton acceptor of the active site. Residue arginine 138 coordinates NADP(+).

This sequence belongs to the NmrA-type oxidoreductase family. Isoflavone reductase subfamily.

It catalyses the reaction (-)-dehydrodiconiferyl alcohol + NADPH + H(+) = (S)-isodihydrodehydrodiconiferyl alcohol + NADP(+). The catalysed reaction is (+)-dehydrodiconiferyl alcohol + NADPH + H(+) = (R)-isodihydrodehydrodiconiferyl alcohol + NADP(+). The enzyme catalyses (2R,3S)-dihydrodehydrodiconiferyl alcohol + NADPH + H(+) = (S)-tetrahydrodehydrodiconiferyl alcohol + NADP(+). It carries out the reaction (2S,3R)-dihydrodehydrodiconiferyl alcohol + NADPH + H(+) = (R)-tetrahydrodehydrodiconiferyl alcohol + NADP(+). In terms of biological role, oxidoreductase involved in lignan biosynthesis. Catalyzes the NADPH-dependent reduction of phenylcoumaran benzylic ethers. Converts dehydrodiconiferyl alcohol (DDC) to isodihydrodehydrodiconiferyl alcohol (IDDDC), and dihydrodehydrodiconiferyl alcohol (DDDC) to tetrahydrodehydrodiconiferyl alcohol (TDDC). The polypeptide is Phenylcoumaran benzylic ether reductase PT1 (Pinus taeda (Loblolly pine)).